The following is a 134-amino-acid chain: ATP synthase epsilon chain, chloroplastic (134 aa).

This sequence belongs to the ATPase epsilon chain family. F-type ATPases have 2 components, CF(1) - the catalytic core - and CF(0) - the membrane proton channel. CF(1) has five subunits: alpha(3), beta(3), gamma(1), delta(1), epsilon(1). CF(0) has three main subunits: a, b and c.

Its subcellular location is the plastid. The protein resides in the chloroplast thylakoid membrane. Its function is as follows. Produces ATP from ADP in the presence of a proton gradient across the membrane. In Chlorella vulgaris (Green alga), this protein is ATP synthase epsilon chain, chloroplastic.